Consider the following 4655-residue polypeptide: Low-density lipoprotein receptor-related protein 2 (4655 aa).

The N-terminal stretch at Met-1–Gly-25 is a signal peptide. Topologically, residues Gln-26–Thr-4423 are extracellular. LDL-receptor class A domains are found at residues Glu-27–Ala-63, Thr-66–Ser-104, Thr-107–Gln-143, Thr-146–Thr-180, Ile-182–Asn-218, Thr-221–Glu-257, and Lys-265–Ser-308. Disulfide bonds link Cys-28–Cys-40, Cys-35–Cys-53, Cys-47–Cys-62, Cys-67–Cys-80, Cys-74–Cys-93, Cys-87–Cys-103, Cys-108–Cys-120, Cys-115–Cys-133, Cys-127–Cys-142, Cys-147–Cys-157, Cys-152–Cys-170, Cys-164–Cys-179, Cys-183–Cys-195, Cys-190–Cys-208, Cys-202–Cys-217, Cys-222–Cys-234, Cys-229–Cys-247, Cys-241–Cys-256, Cys-266–Cys-279, Cys-273–Cys-292, and Cys-286–Cys-307. N-linked (GlcNAc...) asparagine glycans are attached at residues Asn-159 and Asn-178. Residues Asn-299, Asn-300, Asn-341, Asn-388, and Asn-463 are each glycosylated (N-linked (GlcNAc...) asparagine). 8 LDL-receptor class B repeats span residues Gln-436–Asn-478, Asn-479–Val-521, Gly-522–Ser-568, Lys-569–Gln-613, Ser-753–Ser-795, Lys-796–Ala-837, Gly-838–Ala-881, and Ser-882–His-925. N-linked (GlcNAc...) asparagine glycosylation is present at Asn-866. The LDL-receptor class A 8 domain occupies Gln-1025 to Gly-1061. Intrachain disulfides connect Cys-1026–Cys-1038, Cys-1033–Cys-1051, and Cys-1045–Cys-1060. The N-linked (GlcNAc...) asparagine glycan is linked to Asn-1064. LDL-receptor class A domains follow at residues Thr-1066–Pro-1102, Ser-1108–Asn-1144, Thr-1148–Val-1184, Asn-1186–Pro-1223, Met-1229–Val-1267, Thr-1270–Pro-1306, and Asp-1304–Asn-1349. 6 disulfides stabilise this stretch: Cys-1067–Cys-1079, Cys-1074–Cys-1092, Cys-1086–Cys-1101, Cys-1109–Cys-1121, Cys-1116–Cys-1134, and Cys-1128–Cys-1143. Trp-1126, Asp-1129, Asp-1131, Asp-1133, Asp-1139, and Glu-1140 together coordinate Ca(2+). A glycan (N-linked (GlcNAc...) asparagine) is linked at Asn-1144. 3 disulfides stabilise this stretch: Cys-1149–Cys-1161, Cys-1156–Cys-1174, and Cys-1168–Cys-1183. Asn-1186 carries N-linked (GlcNAc...) asparagine glycosylation. Disulfide bonds link Cys-1187-Cys-1200, Cys-1194-Cys-1213, Cys-1207-Cys-1222, Cys-1230-Cys-1243, Cys-1237-Cys-1256, Cys-1250-Cys-1266, Cys-1271-Cys-1283, Cys-1278-Cys-1296, Cys-1290-Cys-1305, Cys-1305-Cys-1325, Cys-1312-Cys-1338, and Cys-1332-Cys-1348. Residues Asp-1208, Val-1210, Asp-1212, Asp-1218, and Glu-1219 each coordinate Ca(2+). 3 N-linked (GlcNAc...) asparagine glycosylation sites follow: Asn-1327, Asn-1340, and Asn-1383. An EGF-like 1; calcium-binding domain is found at Asp-1390–Lys-1429. 3 disulfides stabilise this stretch: Cys-1394–Cys-1404, Cys-1400–Cys-1413, and Cys-1415–Cys-1428. N-linked (GlcNAc...) asparagine glycans are attached at residues Asn-1464, Asn-1496, and Asn-1550. 5 LDL-receptor class B repeats span residues Gly-1478 to Gly-1520, Arg-1521 to Met-1563, His-1566 to Asn-1609, Arg-1610 to Ser-1654, and Val-1655 to Ser-1695. A glycan (N-linked (GlcNAc...) asparagine) is linked at Asn-1675. Positions Ser-1700–Leu-1741 constitute an EGF-like 2 domain. 3 cysteine pairs are disulfide-bonded: Cys-1704/Cys-1713, Cys-1709/Cys-1725, and Cys-1727/Cys-1740. 5 LDL-receptor class B repeats span residues Gln-1790–Ser-1832, Arg-1833–Arg-1882, Gly-1883–Glu-1930, Gln-1931–Phe-1972, and Leu-1973–Arg-2013. Asn-1810 is a glycosylation site (N-linked (GlcNAc...) asparagine). Asn-2055 carries an N-linked (GlcNAc...) asparagine glycan. LDL-receptor class B repeat units lie at residues Gly-2107–Ala-2156, Gly-2157–Asn-2201, Arg-2202–Asp-2245, Gly-2246–Ser-2289, Asp-2431–Thr-2477, Arg-2478–Gln-2518, Gly-2519–Glu-2562, Asp-2563–Tyr-2604, and Ile-2605–Asn-2646. Residues Asn-2177 and Asn-2224 are each glycosylated (N-linked (GlcNAc...) asparagine). 2 N-linked (GlcNAc...) asparagine glycosylation sites follow: Asn-2499 and Asn-2547. 10 consecutive LDL-receptor class A domains span residues Arg-2699–Ala-2737, Thr-2740–Leu-2776, Asp-2779–Pro-2818, Thr-2821–Thr-2860, Thr-2863–Gly-2900, Thr-2905–Gln-2944, Asn-2947–Thr-2989, Thr-2992–Leu-3028, Thr-3031–His-3069, and Thr-3074–Gly-3110. Cystine bridges form between Cys-2700/Cys-2712, Cys-2707/Cys-2725, Cys-2719/Cys-2736, Cys-2741/Cys-2753, Cys-2748/Cys-2766, Cys-2760/Cys-2775, Cys-2780/Cys-2793, Cys-2788/Cys-2806, Cys-2800/Cys-2817, Cys-2822/Cys-2835, Cys-2829/Cys-2848, Cys-2842/Cys-2859, Cys-2864/Cys-2876, Cys-2871/Cys-2889, Cys-2883/Cys-2899, Cys-2906/Cys-2918, Cys-2913/Cys-2931, and Cys-2925/Cys-2943. Asn-2781 carries N-linked (GlcNAc...) asparagine glycosylation. N-linked (GlcNAc...) asparagine glycans are attached at residues Asn-2809 and Asn-2810. N-linked (GlcNAc...) asparagine glycosylation occurs at Asn-2947. 18 disulfide bridges follow: Cys-2948–Cys-2965, Cys-2955–Cys-2978, Cys-2972–Cys-2988, Cys-2993–Cys-3005, Cys-3000–Cys-3018, Cys-3012–Cys-3027, Cys-3032–Cys-3044, Cys-3039–Cys-3057, Cys-3051–Cys-3068, Cys-3075–Cys-3087, Cys-3082–Cys-3100, Cys-3094–Cys-3109, Cys-3114–Cys-3126, Cys-3122–Cys-3135, Cys-3137–Cys-3150, Cys-3156–Cys-3167, Cys-3163–Cys-3176, and Cys-3178–Cys-3191. N-linked (GlcNAc...) asparagine glycosylation is present at Asn-2987. An EGF-like 3 domain is found at Gly-3110–Val-3151. Residue Asn-3125 is glycosylated (N-linked (GlcNAc...) asparagine). One can recognise an EGF-like 4; calcium-binding domain in the interval Asp-3152 to Arg-3192. N-linked (GlcNAc...) asparagine glycosylation is found at Asn-3211, Asn-3257, Asn-3315, and Asn-3355. LDL-receptor class B repeat units lie at residues Lys-3239 to Ser-3281, Arg-3282 to Arg-3324, Gly-3333 to Asn-3376, Asp-3377 to Thr-3419, and Ile-3420 to Tyr-3460. A glycan (N-linked (GlcNAc...) asparagine) is linked at Asn-3446. 11 consecutive LDL-receptor class A domains span residues Met-3511–Pro-3549, Phe-3552–Glu-3590, His-3593–Ala-3631, Thr-3634–Met-3672, Leu-3677–Glu-3715, Thr-3718–Ala-3755, Glu-3758–Glu-3794, Thr-3797–Pro-3833, Tyr-3841–Leu-3879, Pro-3882–Arg-3921, and Pro-3927–Asn-3963. Intrachain disulfides connect Cys-3512-Cys-3525, Cys-3519-Cys-3538, Cys-3532-Cys-3548, Cys-3553-Cys-3565, Cys-3560-Cys-3578, Cys-3572-Cys-3589, Cys-3594-Cys-3606, Cys-3601-Cys-3619, Cys-3613-Cys-3630, Cys-3635-Cys-3647, Cys-3642-Cys-3660, Cys-3654-Cys-3671, Cys-3678-Cys-3692, Cys-3686-Cys-3705, Cys-3699-Cys-3714, Cys-3719-Cys-3732, Cys-3727-Cys-3745, Cys-3739-Cys-3754, Cys-3759-Cys-3771, Cys-3766-Cys-3784, Cys-3778-Cys-3793, Cys-3798-Cys-3810, Cys-3805-Cys-3823, Cys-3817-Cys-3832, Cys-3842-Cys-3854, Cys-3849-Cys-3867, Cys-3861-Cys-3878, Cys-3883-Cys-3896, Cys-3891-Cys-3909, Cys-3903-Cys-3920, Cys-3928-Cys-3940, Cys-3935-Cys-3953, and Cys-3947-Cys-3962. Asn-3564 carries N-linked (GlcNAc...) asparagine glycosylation. N-linked (GlcNAc...) asparagine glycosylation occurs at Asn-3680. The N-linked (GlcNAc...) asparagine glycan is linked to Asn-3978. Positions Asp-4007–Ala-4048 constitute an EGF-like 5; calcium-binding domain. 3 disulfides stabilise this stretch: Cys-4011–Cys-4021, Cys-4017–Cys-4030, and Cys-4032–Cys-4047. Asn-4068 is a glycosylation site (N-linked (GlcNAc...) asparagine). 3 LDL-receptor class B repeats span residues Arg-4154–Leu-4196, Gly-4197–Asn-4240, and Asp-4242–Gln-4283. Asn-4327 is a glycosylation site (N-linked (GlcNAc...) asparagine). Residues Leu-4377–Glu-4411 enclose the EGF-like 6 domain. 3 disulfides stabilise this stretch: Cys-4381–Cys-4389, Cys-4383–Cys-4399, and Cys-4401–Cys-4410. A helical membrane pass occupies residues Ala-4424–Phe-4446. Topologically, residues His-4447–Val-4655 are cytoplasmic. An SH3-binding motif is present at residues Ser-4453–Pro-4462. The PxLPxI/L motif 1; mediates interaction with ANKRA2 motif lies at Pro-4456 to Leu-4461. A PxLPxI/L motif 2; mediates interaction with ANKRA2 motif is present at residues Pro-4459–Leu-4464. Ser-4463 and Ser-4466 each carry phosphoserine. Residues Phe-4521–Tyr-4526 carry the Endocytosis signal motif. The disordered stretch occupies residues Lys-4550–Gly-4574. The segment covering Thr-4565–Gly-4574 has biased composition (polar residues). Ser-4569 bears the Phosphoserine mark. The segment at Gln-4589 to Glu-4602 is interaction with DAB2. Positions Asn-4595–Tyr-4598 match the NPXY motif motif. Positions Tyr-4598 to Met-4601 match the SH2-binding motif. Residues Met-4601–Val-4655 form a disordered region. The SH3-binding motif lies at Ala-4611–Lys-4622. Residues Thr-4612 to Lys-4624 are compositionally biased toward pro residues. Ser-4616 carries the post-translational modification Phosphoserine. A Phosphothreonine modification is found at Thr-4632. Position 4653 is a phosphoserine (Ser-4653).

The protein belongs to the LDLR family. As to quaternary structure, binds plasminogen, extracellular matrix components, plasminogen activator-plasminogen activator inhibitor type I complex, apolipoprotein E-enriched beta-VLDL, lipoprotein lipase, lactoferrin, CLU/clusterin and calcium. Forms a multimeric complex together with LRPAP1. Interacts (via PxLPxI/L motif) with ANKRA2 (via ankyrin repeats). Interacts with LRP2BP. Interacts (via NPXY motif) with DAB2; the interaction is not affected by tyrosine phosphorylation of the NPXY motif. Interacts with MB. Interacts with BMP4. Interacts with the Sonic hedgehog protein N-product which is the active product of SHH. Interacts with CST3 in a calcium-dependent manner. Interacts with the vitamin-D binding protein GC/DBP. Interacts with sex hormone-binding protein SHBG. Interacts with angiotensin-2. Also interacts with angiotensin 1-7. Interacts with APOM. Interacts with selenoprotein SEPP1. Interacts with LEP. Interacts with ALB. Interacts with the antiapoptotic protein BIRC5/survivin. Interacts with matrix metalloproteinase MMP2 in complex with metalloproteinase inhibitor TIMP1. In neurons, forms a trimeric complex with APP and APPB1/FE65. Interacts with LDLRAP1/ARH; mediates trafficking of LRP2 to the endocytic recycling compartment. Does not interact with beta-amyloid protein 40 alone but interacts with the complex composed of beta-amyloid protein 40 and CLU/APOJ. Interacts with MDK. In terms of processing, a fraction undergoes proteolytic cleavage of the extracellular domain at the cell membrane to generate a cytoplasmic tail fragment. This is internalized into the early endosome from where it trafficks in an LDLRAP1/ARH-dependent manner to the endocytic recycling compartment (ERC). In the ERC, it is further cleaved by gamma-secretase to release a fragment which translocates to the nucleus and mediates transcriptional repression. Post-translationally, N-glycosylation is required for ligand binding. As to expression, expressed in first and third trimester cytotrophoblasts in the placenta (at protein level). Absorptive epithelia, including renal proximal tubules.

The protein localises to the apical cell membrane. Its subcellular location is the endosome lumen. It localises to the membrane. It is found in the coated pit. The protein resides in the cell projection. The protein localises to the dendrite. Its subcellular location is the axon. Its function is as follows. Multiligand endocytic receptor. Acts together with CUBN to mediate endocytosis of high-density lipoproteins. Mediates receptor-mediated uptake of polybasic drugs such as aprotinin, aminoglycosides and polymyxin B. In the kidney, mediates the tubular uptake and clearance of leptin. Also mediates transport of leptin across the blood-brain barrier through endocytosis at the choroid plexus epithelium. Endocytosis of leptin in neuronal cells is required for hypothalamic leptin signaling and leptin-mediated regulation of feeding and body weight. Mediates endocytosis and subsequent lysosomal degradation of CST3 in kidney proximal tubule cells. Mediates renal uptake of 25-hydroxyvitamin D3 in complex with the vitamin D3 transporter GC/DBP. Mediates renal uptake of metallothionein-bound heavy metals. Together with CUBN, mediates renal reabsorption of myoglobin. Mediates renal uptake and subsequent lysosomal degradation of APOM. Plays a role in kidney selenium homeostasis by mediating renal endocytosis of selenoprotein SEPP1. Mediates renal uptake of the antiapoptotic protein BIRC5/survivin which may be important for functional integrity of the kidney. Mediates renal uptake of matrix metalloproteinase MMP2 in complex with metalloproteinase inhibitor TIMP1. Mediates endocytosis of Sonic hedgehog protein N-product (ShhN), the active product of SHH. Also mediates ShhN transcytosis. In the embryonic neuroepithelium, mediates endocytic uptake and degradation of BMP4, is required for correct SHH localization in the ventral neural tube and plays a role in patterning of the ventral telencephalon. Required at the onset of neurulation to sequester SHH on the apical surface of neuroepithelial cells of the rostral diencephalon ventral midline and to control PTCH1-dependent uptake and intracellular trafficking of SHH. During neurulation, required in neuroepithelial cells for uptake of folate bound to the folate receptor FOLR1 which is necessary for neural tube closure. In the adult brain, negatively regulates BMP signaling in the subependymal zone which enables neurogenesis to proceed. In astrocytes, mediates endocytosis of ALB which is required for the synthesis of the neurotrophic factor oleic acid. Involved in neurite branching. During optic nerve development, required for SHH-mediated migration and proliferation of oligodendrocyte precursor cells. Mediates endocytic uptake and clearance of SHH in the retinal margin which protects retinal progenitor cells from mitogenic stimuli and keeps them quiescent. Plays a role in reproductive organ development by mediating uptake in reproductive tissues of androgen and estrogen bound to the sex hormone binding protein SHBG. Mediates endocytosis of angiotensin-2. Also mediates endocytosis of angiotensis 1-7. Binds to the complex composed of beta-amyloid protein 40 and CLU/APOJ and mediates its endocytosis and lysosomal degradation. Required for embryonic heart development. Required for normal hearing, possibly through interaction with estrogen in the inner ear. The polypeptide is Low-density lipoprotein receptor-related protein 2 (Homo sapiens (Human)).